The sequence spans 119 residues: Holo-[acyl-carrier-protein] synthase (119 aa).

Mg(2+) contacts are provided by aspartate 8 and glutamate 58.

Belongs to the P-Pant transferase superfamily. AcpS family. Mg(2+) is required as a cofactor.

Its subcellular location is the cytoplasm. The enzyme catalyses apo-[ACP] + CoA = holo-[ACP] + adenosine 3',5'-bisphosphate + H(+). In terms of biological role, transfers the 4'-phosphopantetheine moiety from coenzyme A to a Ser of acyl-carrier-protein. In Geobacillus sp. (strain WCH70), this protein is Holo-[acyl-carrier-protein] synthase.